The following is a 384-amino-acid chain: Glutamate 5-kinase (384 aa).

Lysine 24 is an ATP binding site. 3 residues coordinate substrate: serine 64, aspartate 149, and asparagine 161. ATP contacts are provided by residues threonine 181–aspartate 182 and threonine 223–lysine 229. Residues proline 288–threonine 370 enclose the PUA domain.

It belongs to the glutamate 5-kinase family.

It is found in the cytoplasm. The catalysed reaction is L-glutamate + ATP = L-glutamyl 5-phosphate + ADP. Its pathway is amino-acid biosynthesis; L-proline biosynthesis; L-glutamate 5-semialdehyde from L-glutamate: step 1/2. Functionally, catalyzes the transfer of a phosphate group to glutamate to form L-glutamate 5-phosphate. The sequence is that of Glutamate 5-kinase from Xylella fastidiosa (strain 9a5c).